Consider the following 397-residue polypeptide: Tryptophan synthase beta chain (397 aa).

N6-(pyridoxal phosphate)lysine is present on Lys-88.

This sequence belongs to the TrpB family. Tetramer of two alpha and two beta chains. Requires pyridoxal 5'-phosphate as cofactor.

The catalysed reaction is (1S,2R)-1-C-(indol-3-yl)glycerol 3-phosphate + L-serine = D-glyceraldehyde 3-phosphate + L-tryptophan + H2O. The protein operates within amino-acid biosynthesis; L-tryptophan biosynthesis; L-tryptophan from chorismate: step 5/5. Functionally, the beta subunit is responsible for the synthesis of L-tryptophan from indole and L-serine. In Haemophilus influenzae (strain ATCC 51907 / DSM 11121 / KW20 / Rd), this protein is Tryptophan synthase beta chain (trpB).